Reading from the N-terminus, the 466-residue chain is Uronate isomerase (466 aa).

It belongs to the metallo-dependent hydrolases superfamily. Uronate isomerase family.

The enzyme catalyses D-glucuronate = D-fructuronate. It catalyses the reaction aldehydo-D-galacturonate = keto-D-tagaturonate. Its pathway is carbohydrate metabolism; pentose and glucuronate interconversion. The sequence is that of Uronate isomerase from Brucella canis (strain ATCC 23365 / NCTC 10854 / RM-666).